The sequence spans 211 residues: MFRNSYIQQNSDIQAAGGLVPMVVEQSARGERAYDIYSRLLKERVIFLVGPVEDYMANLICAQLLFLEAENPDKDIHLYINSPGGSVTAGMSIYDTMQFIKPNVSTTCIGQACSMGAFLLTAGAPGKRFCLPNSRVMIHQPLGGFQGQASDIEIHAKEILFIRERLNTLMAKHSGRTLEEIERDTNRDNFMSAEAAREYGLIDEVINQRPA.

Ser114 functions as the Nucleophile in the catalytic mechanism. Residue His139 is part of the active site.

It belongs to the peptidase S14 family. As to quaternary structure, fourteen ClpP subunits assemble into 2 heptameric rings which stack back to back to give a disk-like structure with a central cavity, resembling the structure of eukaryotic proteasomes.

Its subcellular location is the cytoplasm. It carries out the reaction Hydrolysis of proteins to small peptides in the presence of ATP and magnesium. alpha-casein is the usual test substrate. In the absence of ATP, only oligopeptides shorter than five residues are hydrolyzed (such as succinyl-Leu-Tyr-|-NHMec, and Leu-Tyr-Leu-|-Tyr-Trp, in which cleavage of the -Tyr-|-Leu- and -Tyr-|-Trp bonds also occurs).. Functionally, cleaves peptides in various proteins in a process that requires ATP hydrolysis. Has a chymotrypsin-like activity. Plays a major role in the degradation of misfolded proteins. The chain is ATP-dependent Clp protease proteolytic subunit from Pseudomonas fluorescens (strain ATCC BAA-477 / NRRL B-23932 / Pf-5).